The chain runs to 297 residues: Protoheme IX farnesyltransferase (297 aa).

A run of 9 helical transmembrane segments spans residues 12–32 (PGIIFGNLISVIGGFLLAAKG), 36–56 (YALFLATLLGVSLVVASGCVF), 85–105 (VSLVYATVLGIAGFALLYLAA), 108–128 (LAMWLAVMGFVVYVGVYSLYM), 133–153 (VYGTLIGSLSGAAPPVIGYCA), 163–183 (LILLLIFSLWQMPHSYAIAIF), 209–229 (ITLYIIGFMVATLMLTLSGYA), 230–250 (GYKYLIVAASVSVWWLGMALQ), and 266–286 (FIFSIVAINSLSVMMSVDFMV).

It belongs to the UbiA prenyltransferase family. Protoheme IX farnesyltransferase subfamily.

Its subcellular location is the cell inner membrane. It carries out the reaction heme b + (2E,6E)-farnesyl diphosphate + H2O = Fe(II)-heme o + diphosphate. Its pathway is porphyrin-containing compound metabolism; heme O biosynthesis; heme O from protoheme: step 1/1. Converts heme B (protoheme IX) to heme O by substitution of the vinyl group on carbon 2 of heme B porphyrin ring with a hydroxyethyl farnesyl side group. The protein is Protoheme IX farnesyltransferase of Sodalis glossinidius (strain morsitans).